The chain runs to 427 residues: MALKITGKSEGQLQLHLYTKQKQFAVPDVPYSIRANVSNKELNVLINTLLKDSGNSEAGKVEFDFLLNGEFVKIPLGQHLKEREISFEDTVELEYVERYPAPEPQDCLLHDDWVSAVEAKDNWILTGCYDNTLNIWTTKGKHKLTIPGHIAPVKGVTWISLDEEKGVFASASQDQTVMLWEWNVKANSVECVQVCKGHERGVDCIAANRSKTRMATGSWDTMLKIWSTDVRNDGDSQPSTSKRQKLDTEKARTPVLTLAGHRECISGVQWIDDNTLVTSSWDHTIKIWDLALSGIKSEICGHKSFFDLSYSHLNGLIIAASPDKNLRLYDPKSNQGTIVKNTYLGHTQWVQSVRWSTTNEYLFVSGAYDNHVKLWDYRSPKAPIFELIGHEDKVLACDWSNPKFILSGGSDNSVRVFKSKIAIGEQK.

A ubiquitin-like (UBL) domain region spans residues 13-97 (LQLHLYTKQK…EDTVELEYVE (85 aa)). WD repeat units follow at residues 109 to 146 (LHDDWVSAVEAKDNWILTGCYDNTLNIWTTKGKHKLTI), 148 to 190 (GHIA…NSVE), 197 to 236 (GHERGVDCIAANRSKTRMATGSWDTMLKIWSTDVRNDGDS), 260 to 298 (GHRECISGVQWIDDNTLVTSSWDHTIKIWDLALSGIKSE), 301 to 339 (GHKSFFDLSYSHLNGLIIAASPDKNLRLYDPKSNQGTIV), 345 to 385 (GHTQ…APIF), and 389 to 427 (GHEDKVLACDWSNPKFILSGGSDNSVRVFKSKIAIGEQK).

Belongs to the WD repeat WDR12/YTM1 family.

The protein resides in the nucleus. It localises to the nucleolus. Its subcellular location is the nucleoplasm. In terms of biological role, required for maturation of ribosomal RNAs and formation of the large ribosomal subunit. The protein is Ribosome biogenesis protein WDR12 homolog of Aedes aegypti (Yellowfever mosquito).